The chain runs to 442 residues: C4-dicarboxylate transport protein (442 aa).

The next 8 helical transmembrane spans lie at glutamine 19 to proline 39, leucine 55 to methionine 75, alanine 90 to valine 110, isoleucine 161 to alanine 181, leucine 199 to isoleucine 219, tryptophan 232 to valine 252, isoleucine 318 to glycine 338, and alanine 366 to valine 386.

Belongs to the dicarboxylate/amino acid:cation symporter (DAACS) (TC 2.A.23) family.

The protein resides in the cell inner membrane. Responsible for the transport of dicarboxylates such as succinate, fumarate, and malate from the periplasm across the membrane. The chain is C4-dicarboxylate transport protein from Delftia acidovorans (strain DSM 14801 / SPH-1).